Reading from the N-terminus, the 373-residue chain is Response regulator aspartate phosphatase J (373 aa).

TPR repeat units follow at residues 99–135 (YYFY…VEDE) and 146–179 (AEVY…GRRR). The L-glutamyl-L-arginyl-glycyl-L-methionyl-L-threonine site is built by E147, Y150, Q181, D192, Y217, N225, H228, Q260, Y297, K300, and D335. TPR repeat units follow at residues 220–253 (AAAY…FEEH) and 259–292 (VQAV…AAEW). A TPR 5 repeat occupies 334–367 (EDLLHDTAERFNQLEHYESAAFFYRRLMNIKKKL).

It belongs to the Rap family. As to quaternary structure, monomer in solution. Homodimer.

Its subcellular location is the cytoplasm. With respect to regulation, inhibited in vitro by the competence and sporulation stimulating factor (CSF), encoded by phrC. However, CSF has at least three targets (RapB, RapC, and RapJ) and the physiological importance of RapJ inhibition by CSF is unknown. Interaction with CSF induces a conformational change in RapJ. Involved in the regulation of sporulation. Acts as a phosphatase that specifically dephosphorylates the sporulation initiation phosphotransferase Spo0F and inhibits its activity. In Bacillus subtilis (strain 168), this protein is Response regulator aspartate phosphatase J (rapJ).